We begin with the raw amino-acid sequence, 176 residues long: 3-hydroxydecanoyl-[acyl-carrier-protein] dehydratase (176 aa).

H75 is an active-site residue.

This sequence belongs to the thioester dehydratase family. FabA subfamily. In terms of assembly, homodimer.

It is found in the cytoplasm. The catalysed reaction is a (3R)-hydroxyacyl-[ACP] = a (2E)-enoyl-[ACP] + H2O. It carries out the reaction (3R)-hydroxydecanoyl-[ACP] = (2E)-decenoyl-[ACP] + H2O. It catalyses the reaction (2E)-decenoyl-[ACP] = (3Z)-decenoyl-[ACP]. Its pathway is lipid metabolism; fatty acid biosynthesis. In terms of biological role, necessary for the introduction of cis unsaturation into fatty acids. Catalyzes the dehydration of (3R)-3-hydroxydecanoyl-ACP to E-(2)-decenoyl-ACP and then its isomerization to Z-(3)-decenoyl-ACP. Can catalyze the dehydratase reaction for beta-hydroxyacyl-ACPs with saturated chain lengths up to 16:0, being most active on intermediate chain length. This Glaesserella parasuis serovar 5 (strain SH0165) (Haemophilus parasuis) protein is 3-hydroxydecanoyl-[acyl-carrier-protein] dehydratase.